The sequence spans 414 residues: Histidine--tRNA ligase (414 aa).

Belongs to the class-II aminoacyl-tRNA synthetase family. Homodimer.

It is found in the cytoplasm. The enzyme catalyses tRNA(His) + L-histidine + ATP = L-histidyl-tRNA(His) + AMP + diphosphate + H(+). The polypeptide is Histidine--tRNA ligase (Ehrlichia ruminantium (strain Gardel)).